Reading from the N-terminus, the 298-residue chain is 4-hydroxy-tetrahydrodipicolinate synthase (298 aa).

Thr48 is a pyruvate binding site. Residue Tyr137 is the Proton donor/acceptor of the active site. The Schiff-base intermediate with substrate role is filled by Lys166. A pyruvate-binding site is contributed by Ile207.

This sequence belongs to the DapA family. Homotetramer; dimer of dimers.

It is found in the cytoplasm. The enzyme catalyses L-aspartate 4-semialdehyde + pyruvate = (2S,4S)-4-hydroxy-2,3,4,5-tetrahydrodipicolinate + H2O + H(+). Its pathway is amino-acid biosynthesis; L-lysine biosynthesis via DAP pathway; (S)-tetrahydrodipicolinate from L-aspartate: step 3/4. Functionally, catalyzes the condensation of (S)-aspartate-beta-semialdehyde [(S)-ASA] and pyruvate to 4-hydroxy-tetrahydrodipicolinate (HTPA). The chain is 4-hydroxy-tetrahydrodipicolinate synthase from Campylobacter lari (strain RM2100 / D67 / ATCC BAA-1060).